The primary structure comprises 406 residues: S-adenosylmethionine synthase (406 aa).

Residue His-17 participates in ATP binding. Position 19 (Asp-19) interacts with Mg(2+). Glu-45 provides a ligand contact to K(+). L-methionine contacts are provided by Glu-58 and Gln-101. Positions 101–111 (QSAEINQGVAR) are flexible loop. ATP is bound by residues 178 to 180 (DGK), Asp-258, 264 to 265 (RK), Ala-281, and Lys-285. Residue Asp-258 coordinates L-methionine. An L-methionine-binding site is contributed by Lys-289.

Belongs to the AdoMet synthase family. As to quaternary structure, homotetramer; dimer of dimers. Mg(2+) serves as cofactor. The cofactor is K(+).

It is found in the cytoplasm. The catalysed reaction is L-methionine + ATP + H2O = S-adenosyl-L-methionine + phosphate + diphosphate. It participates in amino-acid biosynthesis; S-adenosyl-L-methionine biosynthesis; S-adenosyl-L-methionine from L-methionine: step 1/1. Its function is as follows. Catalyzes the formation of S-adenosylmethionine (AdoMet) from methionine and ATP. The overall synthetic reaction is composed of two sequential steps, AdoMet formation and the subsequent tripolyphosphate hydrolysis which occurs prior to release of AdoMet from the enzyme. This Bifidobacterium longum (strain NCC 2705) protein is S-adenosylmethionine synthase.